The sequence spans 641 residues: Serine/threonine-protein kinase PK-1 (641 aa).

Residues 18–280 (YRVDARIAVG…ARARDARARL (263 aa)) form the Protein kinase domain. Residues 24-32 (IAVGGMATV) and Lys47 contribute to the ATP site. The active-site Proton acceptor is the Asp141. Positions 317 to 347 (LPVNEEDEGADAAHRTSRFRSPPPLPPRGRT) are disordered. 4 PASTA domains span residues 375 to 441 (SGQF…TLSK), 442 to 508 (GPRT…LTVS), 509 to 576 (KGAP…TLSK), and 577 to 641 (GPEM…IEIR). The disordered stretch occupies residues 469 to 494 (KPGMSTREFSDSVPAGSVISTEPGKG).

The protein belongs to the protein kinase superfamily. Ser/Thr protein kinase family. In terms of processing, autophosphorylated on threonine residue(s).

It catalyses the reaction L-seryl-[protein] + ATP = O-phospho-L-seryl-[protein] + ADP + H(+). The catalysed reaction is L-threonyl-[protein] + ATP = O-phospho-L-threonyl-[protein] + ADP + H(+). The sequence is that of Serine/threonine-protein kinase PK-1 (spk1) from Streptomyces toyocaensis.